We begin with the raw amino-acid sequence, 713 residues long: Denticleless protein homolog (713 aa).

WD repeat units lie at residues G47 to L89, A96 to E135, and G138 to F178. A DDB1-binding motif motif is present at residues W168–R171. The Nuclear localization signal motif lies at P197–K204. WD repeat units follow at residues D215 to R254, T270 to V309, G314 to V355, and G359 to A399. A DDB1-binding motif motif is present at residues W244–R247. Disordered stretches follow at residues T474–A544, G604–V623, and S635–S700. Composition is skewed to polar residues over residues T504–P516 and G612–V623. The segment covering S635 to S644 has biased composition (basic and acidic residues). The span at N686–G699 shows a compositional bias: polar residues.

This sequence belongs to the WD repeat cdt2 family. In terms of assembly, component of the DCX(DTL) E3 ubiquitin ligase complex, at least composed of cul4 (cul4a or cul4b), ddb1, dtl/cdt2 and rbx1.

Its subcellular location is the nucleus. It localises to the cytoplasm. The protein resides in the cytoskeleton. It is found in the microtubule organizing center. The protein localises to the centrosome. Its subcellular location is the chromosome. Its pathway is protein modification; protein ubiquitination. Functionally, substrate-specific adapter of a DCX (DDB1-CUL4-X-box) E3 ubiquitin-protein ligase complex required for cell cycle control, DNA damage response and translesion DNA synthesis. The DCX(DTL) complex, also named CRL4(CDT2) complex, mediates the polyubiquitination and subsequent degradation of CDT1, CDKN1A/p21(CIP1), KMT5A and SDE2. CDT1 degradation in response to DNA damage is necessary to ensure proper cell cycle regulation of DNA replication. CDKN1A/p21(CIP1) degradation during S phase or following UV irradiation is essential to control replication licensing. KMT5A degradation is also important for a proper regulation of mechanisms such as TGF-beta signaling, cell cycle progression, DNA repair and cell migration. Most substrates require their interaction with PCNA for their polyubiquitination: substrates interact with PCNA via their PIP-box, and those containing the 'K+4' motif in the PIP box, recruit the DCX(DTL) complex, leading to their degradation. In undamaged proliferating cells, the DCX(DTL) complex also promotes the 'Lys-164' monoubiquitination of PCNA, thereby being involved in PCNA-dependent translesion DNA synthesis. May play a role in the regulation of the circadian clock. The sequence is that of Denticleless protein homolog (dtl) from Xenopus tropicalis (Western clawed frog).